Here is a 209-residue protein sequence, read N- to C-terminus: NADH-ubiquinone oxidoreductase subunit 9 (209 aa).

This sequence belongs to the complex I 30 kDa subunit family. In terms of assembly, complex I is composed of about 30 different subunits.

It is found in the mitochondrion inner membrane. It catalyses the reaction a ubiquinone + NADH + 5 H(+)(in) = a ubiquinol + NAD(+) + 4 H(+)(out). Core subunit of the mitochondrial membrane respiratory chain NADH dehydrogenase (Complex I) that is believed to belong to the minimal assembly required for catalysis. Complex I functions in the transfer of electrons from NADH to the respiratory chain. The immediate electron acceptor for the enzyme is believed to be ubiquinone. The polypeptide is NADH-ubiquinone oxidoreductase subunit 9 (nad9) (Dictyostelium citrinum (Slime mold)).